Here is a 104-residue protein sequence, read N- to C-terminus: Pyrimidine/purine nucleoside phosphorylase (104 aa).

Belongs to the nucleoside phosphorylase PpnP family.

The catalysed reaction is a purine D-ribonucleoside + phosphate = a purine nucleobase + alpha-D-ribose 1-phosphate. The enzyme catalyses adenosine + phosphate = alpha-D-ribose 1-phosphate + adenine. It catalyses the reaction cytidine + phosphate = cytosine + alpha-D-ribose 1-phosphate. It carries out the reaction guanosine + phosphate = alpha-D-ribose 1-phosphate + guanine. The catalysed reaction is inosine + phosphate = alpha-D-ribose 1-phosphate + hypoxanthine. The enzyme catalyses thymidine + phosphate = 2-deoxy-alpha-D-ribose 1-phosphate + thymine. It catalyses the reaction uridine + phosphate = alpha-D-ribose 1-phosphate + uracil. It carries out the reaction xanthosine + phosphate = alpha-D-ribose 1-phosphate + xanthine. Its function is as follows. Catalyzes the phosphorolysis of diverse nucleosides, yielding D-ribose 1-phosphate and the respective free bases. Can use uridine, adenosine, guanosine, cytidine, thymidine, inosine and xanthosine as substrates. Also catalyzes the reverse reactions. In Geotalea daltonii (strain DSM 22248 / JCM 15807 / FRC-32) (Geobacter daltonii), this protein is Pyrimidine/purine nucleoside phosphorylase.